A 289-amino-acid polypeptide reads, in one-letter code: MAFLSKVGRLFSQTSSHVTASSSMLQSIRCMSSSKIFVGGISYSTDEFGLREAFSKYGEVVDAKIIVDRETGRSRGFAFVTFTSTEEASNAMQLDGQDLHGRRIRVNYATERGSGFGGRGFGGPGGGYGASDGGYGAPAGGYGGGAGGYGGNSSYSGNAGGGGGYGGNSSYGGNAGGYGGNPPYSGNAVGGGGGYGSNFGGGGGYGVAGGVGGSENFAQGSSTNAGFDDKFESNQPLGNDTDHQTESGLGGDEQFGGSDNQFGDAENGNTENGPVGFDQTDDGDVAKRA.

The transit peptide at 1 to 31 directs the protein to the mitochondrion; sequence MAFLSKVGRLFSQTSSHVTASSSMLQSIRCM. The RRM domain occupies 34–111; the sequence is SKIFVGGISY…RRIRVNYATE (78 aa). The disordered stretch occupies residues 219–289; sequence QGSSTNAGFD…TDDGDVAKRA (71 aa). A compositionally biased stretch (polar residues) spans 257–272; sequence GSDNQFGDAENGNTEN.

It belongs to the GR-RBP family. As to quaternary structure, homodimer. Interacts with MORF8/RIP1 AND RBG3/ORRM3. Binds to RBG2/ORRM5.

The protein localises to the mitochondrion. In terms of biological role, possibly has a role in RNA transcription or processing during stress. Binds RNAs and DNAs sequence with a preference to single-stranded nucleic acids. Displays strong affinity to poly(U) sequence. Involved in C-to-U editing of mitochondrial RNA. Functions as a major mitochondrial editing factor. Controls 44 percent of the mitochondrial editing sites. The polypeptide is Glycine-rich RNA-binding protein 5, mitochondrial (Arabidopsis thaliana (Mouse-ear cress)).